The primary structure comprises 389 residues: Chalcone synthase (389 aa).

Cys-164 is an active-site residue.

Belongs to the thiolase-like superfamily. Chalcone/stilbene synthases family.

The enzyme catalyses (E)-4-coumaroyl-CoA + 3 malonyl-CoA + 3 H(+) = 2',4,4',6'-tetrahydroxychalcone + 3 CO2 + 4 CoA. The protein operates within secondary metabolite biosynthesis; flavonoid biosynthesis. Functionally, the primary product of this enzyme is 4,2',4',6'-tetrahydroxychalcone (also termed naringenin-chalcone or chalcone) which can under specific conditions spontaneously isomerize into naringenin. The protein is Chalcone synthase (CHS) of Pueraria montana var. lobata (Kudzu vine).